Consider the following 210-residue polypeptide: Protein LURP-one-related 5 (210 aa).

The protein belongs to the LOR family.

In terms of biological role, might be related to the phospholipid scramblase and tubby-like superfamily of membrane tethered transcription factors. In Arabidopsis thaliana (Mouse-ear cress), this protein is Protein LURP-one-related 5.